The sequence spans 483 residues: O-acetyltransferase pboB (483 aa).

This sequence belongs to the fumigaclavine B O-acetyltransferase family. In terms of assembly, monomer.

The protein operates within secondary metabolite biosynthesis. Its function is as follows. O-acetyltransferase; part of the gene cluster that mediates the biosynthesis of protubonine B, a hydroxylated and diacetylated cyclo-L-Trp-L-Leu derivative. Within the pathway, pboB catalyzes the acetylation of protubonine C at N-1 of the indoline ring to produce protubonine B. The first step of the protubonine B synthesis is performed by the nonribosomal peptide synthetase pboA that catalyzes the formation of cyclo-L-Trp-L-Leu by condensing L-Leu with L-Trp. The flavin-dependent monooxygenase pboD is responsible for hydroxylation at C-3 of the indole ring and subsequent formation of the pyrrolidine ring, leadind to protubonine D. Protubonine D is further diacetylated by two acetyltransferases, pboB and pboC, to form the final product protubonine B via protubonine C. This is O-acetyltransferase pboB from Aspergillus ustus.